A 544-amino-acid chain; its full sequence is Fructose dehydrogenase large subunit (544 aa).

Position 14–30 (14–30 (GAGICGSLLAHKLVRNG)) interacts with FAD. H478 serves as the catalytic Proton acceptor.

Belongs to the GMC oxidoreductase family. Heterotrimer composed of FdhL, FdhS and FdhC. It depends on FAD as a cofactor.

The protein localises to the cell membrane. It carries out the reaction keto-D-fructose + a ubiquinone = 5-dehydro-D-fructose + a ubiquinol. Functionally, catalytic subunit of fructose dehydrogenase, an enzyme that catalyzes the oxidation of D-fructose to produce 5-keto-D-fructose. The chain is Fructose dehydrogenase large subunit (fdhL) from Gluconobacter japonicus.